A 107-amino-acid chain; its full sequence is U1-lycotoxin-Ls1f (107 aa).

The signal sequence occupies residues 1-20 (MMKVLVVVALLVTLISYSSS). Positions 21-41 (EGIDDLEADELLSLMANEQTR) are excised as a propeptide. 4 cysteine pairs are disulfide-bonded: C44–C59, C51–C68, C58–C86, and C70–C84.

It belongs to the neurotoxin 19 (CSTX) family. 04 (U1-Lctx) subfamily. Expressed by the venom gland.

The protein localises to the secreted. This is U1-lycotoxin-Ls1f from Lycosa singoriensis (Wolf spider).